The following is a 373-amino-acid chain: Lipoyl amidotransferase LIPT1, mitochondrial (373 aa).

Residues 1–25 (MLIPLSMKNCFRLLCQHKVPAAGFK) constitute a mitochondrion transit peptide. One can recognise a BPL/LPL catalytic domain in the interval 57–243 (LEGKPILFLW…EYAAHHQVDG (187 aa)). (R)-lipoyl-5'-AMP is bound by residues Tyr107, Lys151, Lys161, and Thr179.

Belongs to the LplA family.

Its subcellular location is the mitochondrion. It carries out the reaction (R)-lipoyl-5'-AMP + L-lysyl-[lipoyl-carrier protein] = N(6)-[(R)-lipoyl]-L-lysyl-[lipoyl-carrier protein] + AMP + 2 H(+). It catalyses the reaction N(6)-[(R)-lipoyl]-L-lysyl-[glycine-cleavage complex H protein] + L-lysyl-[lipoyl-carrier protein] = L-lysyl-[glycine-cleavage complex H protein] + N(6)-[(R)-lipoyl]-L-lysyl-[lipoyl-carrier protein]. The protein operates within protein modification; protein lipoylation via exogenous pathway; protein N(6)-(lipoyl)lysine from lipoate: step 2/2. Functionally, lipoyl amidotransferase that catalyzes the transfer of lipoyl moieties from lipoyl-protein H of the glycine cleavage system (lipoyl-GCSH) to E2 subunits of the pyruvate dehydrogenase complex (PDCE2). Unable to catalyze the transfer of octanoyl from octanoyl-GCSH to PDCE2. In vitro, it is also able to catalyze the transfer of the lipoyl group from lipoyl-AMP to the specific lysine residue of lipoyl domains of lipoate-dependent enzymes but this reaction may not be physiologically relevant. The protein is Lipoyl amidotransferase LIPT1, mitochondrial of Mus musculus (Mouse).